We begin with the raw amino-acid sequence, 713 residues long: Probable muscarinic acetylcholine receptor gar-1 (713 aa).

The Extracellular segment spans residues 1–20 (MPNYTVPPDPADTSWDSPYS). N-linked (GlcNAc...) asparagine glycosylation is present at asparagine 3. The chain crosses the membrane as a helical span at residues 21–41 (IPVQIVVWIIIIVLSLETIIG). Residues 42-66 (NAMVVMAYRIERNISKQVSNRYIVS) lie on the Cytoplasmic side of the membrane. A helical transmembrane segment spans residues 67-87 (LAISDLIIGIEGFPFFTVYVL). Residues 88 to 101 (NGDRWPLGWVACQT) are Extracellular-facing. Cysteine 99 and cysteine 180 are disulfide-bonded. The chain crosses the membrane as a helical span at residues 102 to 122 (WLFLDYTLCLVSILTVLLITA). The Cytoplasmic portion of the chain corresponds to 123 to 144 (DRYLSVCHTAKYLKWQSPTKTQ). A helical membrane pass occupies residues 145-165 (LLIVMSWLLPAIIFGIMIYGW). Over 166–189 (QAMTGQSTSMSGAECSAPFLSNPY) the chain is Extracellular. The helical transmembrane segment at 190–210 (VNMGMYVAYYWTTLVAMLILY) threads the bilayer. Topologically, residues 211-633 (KGIHQAAKNL…QTKAEKRAHK (423 aa)) are cytoplasmic. 4 disordered regions span residues 256-350 (KEKA…SRRC), 381-403 (SRYS…VEKA), 427-475 (KNTD…KQAE), and 515-585 (LIRR…TDTF). 2 stretches are compositionally biased toward polar residues: residues 266–275 (SGYTSNQAGD) and 287–315 (PETS…NDQN). 2 stretches are compositionally biased toward basic and acidic residues: residues 320 to 333 (EEER…RESN) and 393 to 403 (HENDEKEVEKA). Residues 429 to 439 (TDSNNDSDTTS) show a composition bias toward low complexity. Residues 444–457 (RSRKYKKNKRPRSS) are compositionally biased toward basic residues. Polar residues predominate over residues 557–571 (LTVNNENRGETSSQP). The helical transmembrane segment at 634 to 656 (AFRTITFIVGFFAILWSPYYIMA) threads the bilayer. Over 657 to 670 (TVYGFCKGECIPSF) the chain is Extracellular. Residues 671–693 (LYTLSYYMCYLNSSGNPFAYALA) form a helical membrane-spanning segment. Residues 694–713 (NRQFRSAFMRMFRGNFNKVA) are Cytoplasmic-facing.

The protein belongs to the G-protein coupled receptor 1 family. Muscarinic acetylcholine receptor subfamily. Expressed in head region of the larva. In adults, expression is seen in the periventricularis magnocellularis (PVM) neuron.

It is found in the cell membrane. Functionally, the muscarinic acetylcholine receptor mediates various cellular responses, including inhibition of adenylate cyclase, breakdown of phosphoinositides and modulation of potassium channels through the action of G proteins. Primary transducing effect is Pi turnover. This chain is Probable muscarinic acetylcholine receptor gar-1 (gar-1), found in Caenorhabditis elegans.